Here is a 530-residue protein sequence, read N- to C-terminus: Structure-specific endonuclease subunit SLX1 homolog 2 (530 aa).

The GIY-YIG domain maps to 4-89 (RFHCVYLLTS…PTKSTRLKTQ (86 aa)). The segment at 232–365 (CALCSLPLRS…PSQPCPCPLC (134 aa)) adopts an SLX1-type zinc-finger fold. Disordered regions lie at residues 276–306 (ATMG…MDAH), 410–438 (NSSL…YCGD), and 474–502 (LPPS…RMTD). A compositionally biased stretch (basic and acidic residues) spans 283-298 (RNERSGEYSNKIKDDS).

Belongs to the SLX1 family. In terms of assembly, forms a heterodimer with a member of the SLX4 family. It depends on a divalent metal cation as a cofactor.

The protein localises to the nucleus. Catalytic subunit of a heterodimeric structure-specific endonuclease that resolves DNA secondary structures generated during DNA repair and recombination. Has endonuclease activity towards branched DNA substrates, introducing single-strand cuts in duplex DNA close to junctions with ss-DNA. This chain is Structure-specific endonuclease subunit SLX1 homolog 2, found in Trypanosoma cruzi (strain CL Brener).